The chain runs to 64 residues: DNA gyrase inhibitor YacG (64 aa).

Residues C6, C9, C25, and C29 each contribute to the Zn(2+) site.

The protein belongs to the DNA gyrase inhibitor YacG family. Interacts with GyrB. Requires Zn(2+) as cofactor.

In terms of biological role, inhibits all the catalytic activities of DNA gyrase by preventing its interaction with DNA. Acts by binding directly to the C-terminal domain of GyrB, which probably disrupts DNA binding by the gyrase. This chain is DNA gyrase inhibitor YacG, found in Haemophilus influenzae (strain ATCC 51907 / DSM 11121 / KW20 / Rd).